Consider the following 129-residue polypeptide: uncharacterized protein (129 aa).

Residues 1 to 20 (MIYPLFRICILGAFLLGSYA) form the signal peptide.

This is an uncharacterized protein from Saccharomyces cerevisiae (strain ATCC 204508 / S288c) (Baker's yeast).